Reading from the N-terminus, the 355-residue chain is UDP-N-acetylglucosamine--N-acetylmuramyl-(pentapeptide) pyrophosphoryl-undecaprenol N-acetylglucosamine transferase (355 aa).

Residues 15-17 (TGG), N127, R163, S191, I244, 263-268 (ALTVSE), and Q288 each bind UDP-N-acetyl-alpha-D-glucosamine.

Belongs to the glycosyltransferase 28 family. MurG subfamily.

The protein resides in the cell inner membrane. It catalyses the reaction di-trans,octa-cis-undecaprenyl diphospho-N-acetyl-alpha-D-muramoyl-L-alanyl-D-glutamyl-meso-2,6-diaminopimeloyl-D-alanyl-D-alanine + UDP-N-acetyl-alpha-D-glucosamine = di-trans,octa-cis-undecaprenyl diphospho-[N-acetyl-alpha-D-glucosaminyl-(1-&gt;4)]-N-acetyl-alpha-D-muramoyl-L-alanyl-D-glutamyl-meso-2,6-diaminopimeloyl-D-alanyl-D-alanine + UDP + H(+). It participates in cell wall biogenesis; peptidoglycan biosynthesis. Functionally, cell wall formation. Catalyzes the transfer of a GlcNAc subunit on undecaprenyl-pyrophosphoryl-MurNAc-pentapeptide (lipid intermediate I) to form undecaprenyl-pyrophosphoryl-MurNAc-(pentapeptide)GlcNAc (lipid intermediate II). This Escherichia coli O139:H28 (strain E24377A / ETEC) protein is UDP-N-acetylglucosamine--N-acetylmuramyl-(pentapeptide) pyrophosphoryl-undecaprenol N-acetylglucosamine transferase.